Consider the following 856-residue polypeptide: DNA mismatch repair protein MutS (856 aa).

618–625 (GPNMGGKS) contacts ATP.

The protein belongs to the DNA mismatch repair MutS family.

Its function is as follows. This protein is involved in the repair of mismatches in DNA. It is possible that it carries out the mismatch recognition step. This protein has a weak ATPase activity. The sequence is that of DNA mismatch repair protein MutS from Shewanella baltica (strain OS155 / ATCC BAA-1091).